A 303-amino-acid polypeptide reads, in one-letter code: Coenzyme PQQ synthesis protein B (303 aa).

This sequence belongs to the PqqB family.

Its pathway is cofactor biosynthesis; pyrroloquinoline quinone biosynthesis. Its function is as follows. May be involved in the transport of PQQ or its precursor to the periplasm. The sequence is that of Coenzyme PQQ synthesis protein B from Pseudomonas entomophila (strain L48).